Reading from the N-terminus, the 175-residue chain is Small ribosomal subunit protein uS5 (175 aa).

Residues 11-74 (LSEVLVDVNR…QAAKKRMMKV (64 aa)) form the S5 DRBM domain.

The protein belongs to the universal ribosomal protein uS5 family. Part of the 30S ribosomal subunit. Contacts proteins S4 and S8.

Functionally, with S4 and S12 plays an important role in translational accuracy. Its function is as follows. Located at the back of the 30S subunit body where it stabilizes the conformation of the head with respect to the body. The chain is Small ribosomal subunit protein uS5 from Rickettsia prowazekii (strain Madrid E).